We begin with the raw amino-acid sequence, 353 residues long: S-adenosylmethionine:tRNA ribosyltransferase-isomerase (353 aa).

This sequence belongs to the QueA family. Monomer.

It is found in the cytoplasm. It carries out the reaction 7-aminomethyl-7-carbaguanosine(34) in tRNA + S-adenosyl-L-methionine = epoxyqueuosine(34) in tRNA + adenine + L-methionine + 2 H(+). It participates in tRNA modification; tRNA-queuosine biosynthesis. In terms of biological role, transfers and isomerizes the ribose moiety from AdoMet to the 7-aminomethyl group of 7-deazaguanine (preQ1-tRNA) to give epoxyqueuosine (oQ-tRNA). The chain is S-adenosylmethionine:tRNA ribosyltransferase-isomerase from Dinoroseobacter shibae (strain DSM 16493 / NCIMB 14021 / DFL 12).